Consider the following 262-residue polypeptide: Nurim (262 aa).

Residues 1-4 (MAPA) are Nuclear-facing. A helical transmembrane segment spans residues 5–28 (LLLVPAALASFILAFGTGVEFVRF). The Perinuclear space segment spans residues 29 to 58 (TSLRPLLGGIPESGGPDARQGWLAALQDRS). The chain crosses the membrane as a helical span at residues 59–80 (ILAPLAWDLGLLLLFVGQHSLM). Residues 81 to 97 (AAERVKAWTSRYFGVLQ) lie on the Nuclear side of the membrane. The chain crosses the membrane as a helical span at residues 98 to 114 (RSLYVACTALALQLVMR). The Perinuclear space segment spans residues 115-133 (YWEPIPKGPVLWEARAEPW). Residues 134 to 164 (ATWVPLLCFVLHVISWLLIFSILLVFDYAEL) form a helical membrane-spanning segment. The Nuclear portion of the chain corresponds to 165–191 (MGLKQVYYHVLGLGEPLALKSPRALRL). The chain crosses the membrane as a helical span at residues 192–210 (FSHLRHPVCVELLTVLWVV). The Perinuclear space portion of the chain corresponds to 211–216 (PTLGTD). A helical transmembrane segment spans residues 217–234 (RLLLAFLLTLYLGLAHGL). The Nuclear portion of the chain corresponds to 235 to 262 (DQQDLRYLRAQLQRKLHLLSRPQDGEAE).

The protein belongs to the nurim family.

The protein resides in the nucleus inner membrane. This is Nurim (NRM) from Pan troglodytes (Chimpanzee).